Here is a 145-residue protein sequence, read N- to C-terminus: Ecdysteroid-regulated 16 kDa protein (145 aa).

The first 16 residues, 1–16, serve as a signal peptide directing secretion; the sequence is MLFYITVTVLLVSAQA. Intrachain disulfides connect Cys22–Cys137 and Cys90–Cys97. Asn51 carries an N-linked (GlcNAc...) asparagine glycan.

It belongs to the NPC2 family.

It localises to the secreted. The protein is Ecdysteroid-regulated 16 kDa protein (ESR16) of Manduca sexta (Tobacco hawkmoth).